The primary structure comprises 179 residues: Replication restart protein DnaT (179 aa).

Positions 156–179 are disordered; sequence GGLPKRDVNTVSEPDSQIPPGFRG.

It belongs to the DnaT family. In terms of assembly, homooligomerizes. Interacts with PriB. Component of the replication restart primosome. Primosome assembly occurs via a 'hand-off' mechanism. PriA binds to replication forks, subsequently PriB then DnaT bind; DnaT then displaces ssDNA to generate the helicase loading substrate.

Its function is as follows. Involved in the restart of stalled replication forks, which reloads the replicative helicase on sites other than the origin of replication. Can function in multiple replication restart pathways. Displaces ssDNA from a PriB-ssDNA complex. Probably forms a spiral filament on ssDNA. This Escherichia coli O157:H7 protein is Replication restart protein DnaT.